We begin with the raw amino-acid sequence, 227 residues long: MAYPFQLGLQDATSPIMEELTNFHDHTLMIVFLISSLVLYIISLMLTTKLTHTSTMDAQEVETIWTILPAVILILIALPSLRILYMMDEINNPALTVKTMGHQWYWSYEYTDYEDLCFDSYMIPTNDLKPGELRLLEVDNRVVLPMELPIRMLISSEDVLHSWAVPSLGLKTDAIPGRLNQATVTSNRPGLFYGQCSEICGSNHSFMPIVLEMVPLKHFENWSASMI.

The Mitochondrial intermembrane segment spans residues 1 to 14 (MAYPFQLGLQDATS). The helical transmembrane segment at 15-45 (PIMEELTNFHDHTLMIVFLISSLVLYIISLM) threads the bilayer. Residues 46-59 (LTTKLTHTSTMDAQ) are Mitochondrial matrix-facing. A helical membrane pass occupies residues 60–87 (EVETIWTILPAVILILIALPSLRILYMM). At 88–227 (DEINNPALTV…HFENWSASMI (140 aa)) the chain is on the mitochondrial intermembrane side. H161, C196, E198, C200, H204, and M207 together coordinate Cu cation. E198 serves as a coordination point for Mg(2+).

Belongs to the cytochrome c oxidase subunit 2 family. In terms of assembly, component of the cytochrome c oxidase (complex IV, CIV), a multisubunit enzyme composed of 14 subunits. The complex is composed of a catalytic core of 3 subunits MT-CO1, MT-CO2 and MT-CO3, encoded in the mitochondrial DNA, and 11 supernumerary subunits COX4I, COX5A, COX5B, COX6A, COX6B, COX6C, COX7A, COX7B, COX7C, COX8 and NDUFA4, which are encoded in the nuclear genome. The complex exists as a monomer or a dimer and forms supercomplexes (SCs) in the inner mitochondrial membrane with NADH-ubiquinone oxidoreductase (complex I, CI) and ubiquinol-cytochrome c oxidoreductase (cytochrome b-c1 complex, complex III, CIII), resulting in different assemblies (supercomplex SCI(1)III(2)IV(1) and megacomplex MCI(2)III(2)IV(2)). Found in a complex with TMEM177, COA6, COX18, COX20, SCO1 and SCO2. Interacts with TMEM177 in a COX20-dependent manner. Interacts with COX20. Interacts with COX16. Cu cation is required as a cofactor.

The protein resides in the mitochondrion inner membrane. The enzyme catalyses 4 Fe(II)-[cytochrome c] + O2 + 8 H(+)(in) = 4 Fe(III)-[cytochrome c] + 2 H2O + 4 H(+)(out). Functionally, component of the cytochrome c oxidase, the last enzyme in the mitochondrial electron transport chain which drives oxidative phosphorylation. The respiratory chain contains 3 multisubunit complexes succinate dehydrogenase (complex II, CII), ubiquinol-cytochrome c oxidoreductase (cytochrome b-c1 complex, complex III, CIII) and cytochrome c oxidase (complex IV, CIV), that cooperate to transfer electrons derived from NADH and succinate to molecular oxygen, creating an electrochemical gradient over the inner membrane that drives transmembrane transport and the ATP synthase. Cytochrome c oxidase is the component of the respiratory chain that catalyzes the reduction of oxygen to water. Electrons originating from reduced cytochrome c in the intermembrane space (IMS) are transferred via the dinuclear copper A center (CU(A)) of subunit 2 and heme A of subunit 1 to the active site in subunit 1, a binuclear center (BNC) formed by heme A3 and copper B (CU(B)). The BNC reduces molecular oxygen to 2 water molecules using 4 electrons from cytochrome c in the IMS and 4 protons from the mitochondrial matrix. This is Cytochrome c oxidase subunit 2 (MT-CO2) from Berylmys bowersi (Bower's white-toothed rat).